Reading from the N-terminus, the 151-residue chain is MMTLTFASPPQNKSDLETGPAFTPRFDEKGLITAVVTDAGDGALLMVAHMNAEALALTLETGVAHYYSRSRRRLWKKGESSGNVQAVREIRTDCDQDAIWLKVSVAGHDATCHTGRRSCFYRTVGVDEGQAKLVITDDERHFDLKQVYAES.

The segment covering 1-13 (MMTLTFASPPQNK) has biased composition (polar residues). The segment at 1–20 (MMTLTFASPPQNKSDLETGP) is disordered. Asp-93 lines the Mg(2+) pocket. Cys-94 is a Zn(2+) binding site. Asp-95 and Asp-97 together coordinate Mg(2+). The Zn(2+) site is built by Cys-112 and Cys-119.

It belongs to the PRA-CH family. As to quaternary structure, homodimer. It depends on Mg(2+) as a cofactor. Zn(2+) is required as a cofactor.

Its subcellular location is the cytoplasm. The catalysed reaction is 1-(5-phospho-beta-D-ribosyl)-5'-AMP + H2O = 1-(5-phospho-beta-D-ribosyl)-5-[(5-phospho-beta-D-ribosylamino)methylideneamino]imidazole-4-carboxamide. It participates in amino-acid biosynthesis; L-histidine biosynthesis; L-histidine from 5-phospho-alpha-D-ribose 1-diphosphate: step 3/9. Functionally, catalyzes the hydrolysis of the adenine ring of phosphoribosyl-AMP. This Sinorhizobium medicae (strain WSM419) (Ensifer medicae) protein is Phosphoribosyl-AMP cyclohydrolase.